Consider the following 179-residue polypeptide: Endoribonuclease YbeY (179 aa).

His148, His152, and His158 together coordinate Zn(2+).

The protein belongs to the endoribonuclease YbeY family. Requires Zn(2+) as cofactor.

The protein resides in the cytoplasm. Single strand-specific metallo-endoribonuclease involved in late-stage 70S ribosome quality control and in maturation of the 3' terminus of the 16S rRNA. This is Endoribonuclease YbeY from Prochlorococcus marinus (strain AS9601).